The sequence spans 825 residues: Transcription regulator galc (825 aa).

A disordered region spans residues 60–102 (RPGPYPYQSSSSSSRELSGSAAKVAIPRTTSASSQSQRRRSAR). Residues 68–79 (SSSSSSRELSGS) show a composition bias toward low complexity. Positions 104–131 (CEPCRQRKIKCDGSKPVCRQCIDHNVSC) form a DNA-binding region, zn(2)-C6 fungal-type. Residues 239-251 (DEAKSRNRKKEDS) are compositionally biased toward basic and acidic residues. 3 disordered regions span residues 239–267 (DEAKSRNRKKEDSTDMEDGVAGGHTMTPP), 642–663 (APGDPSPDPAVPPSARQGSRRI), and 804–825 (HLRDIDNTPSSRAGSMEFERHH).

It is found in the nucleus. Its function is as follows. Transcription factor that negatively regulates the biosynthesis of ochratoxin A (OTA), a mycotoxin composed of a chlorinated type I polyketide dihydroisocoumarin moiety linked to L-phenylalanine, and demonstrated to have nephrotoxic, immunotoxic, genotoxic, neurotoxic, and teratogenic properties. Also regulates cellular redox homeostasis and sensitivity to H(2)O(2). Carbon sources such as sucrose, glucose and arabinose repress gal4, leading to up-regulation of OTA biosynthetic genes and altered cellular redox homeostasis. The polypeptide is Transcription regulator galc (Aspergillus niger (strain ATCC MYA-4892 / CBS 513.88 / FGSC A1513)).